A 335-amino-acid polypeptide reads, in one-letter code: Pyridoxal 5'-phosphate synthase subunit PdxS (335 aa).

Aspartate 59 contacts D-ribose 5-phosphate. Lysine 116 serves as the catalytic Schiff-base intermediate with D-ribose 5-phosphate. Residue glycine 188 coordinates D-ribose 5-phosphate. Lysine 200 contributes to the D-glyceraldehyde 3-phosphate binding site. D-ribose 5-phosphate is bound by residues glycine 253 and 274–275 (GS).

It belongs to the PdxS/SNZ family. In the presence of PdxT, forms a dodecamer of heterodimers.

It carries out the reaction aldehydo-D-ribose 5-phosphate + D-glyceraldehyde 3-phosphate + L-glutamine = pyridoxal 5'-phosphate + L-glutamate + phosphate + 3 H2O + H(+). The protein operates within cofactor biosynthesis; pyridoxal 5'-phosphate biosynthesis. Its function is as follows. Catalyzes the formation of pyridoxal 5'-phosphate from ribose 5-phosphate (RBP), glyceraldehyde 3-phosphate (G3P) and ammonia. The ammonia is provided by the PdxT subunit. Can also use ribulose 5-phosphate and dihydroxyacetone phosphate as substrates, resulting from enzyme-catalyzed isomerization of RBP and G3P, respectively. This Desulfurococcus amylolyticus (strain DSM 18924 / JCM 16383 / VKM B-2413 / 1221n) (Desulfurococcus kamchatkensis) protein is Pyridoxal 5'-phosphate synthase subunit PdxS.